Reading from the N-terminus, the 193-residue chain is Thymidine kinase (193 aa).

ATP contacts are provided by residues Ser-9–Ser-16 and Asp-87–Gln-90. The Proton acceptor role is filled by Glu-88. Residues Cys-145, Cys-147, Cys-182, and His-185 each contribute to the Zn(2+) site.

Belongs to the thymidine kinase family. As to quaternary structure, homotetramer.

It is found in the cytoplasm. It catalyses the reaction thymidine + ATP = dTMP + ADP + H(+). The chain is Thymidine kinase from Haemophilus influenzae (strain ATCC 51907 / DSM 11121 / KW20 / Rd).